A 273-amino-acid chain; its full sequence is Homeobox protein HMX2 (273 aa).

The tract at residues Met-1–Thr-152 is disordered. Residues Lys-93–Gly-102 are compositionally biased toward gly residues. The segment covering Ser-114–Leu-123 has biased composition (basic and acidic residues). The segment at residues Lys-149–Leu-208 is a DNA-binding region (homeobox).

Belongs to the HMX homeobox family.

Its subcellular location is the nucleus. In terms of biological role, transcription factor involved in specification of neuronal cell types and which is required for inner ear and hypothalamus development. The polypeptide is Homeobox protein HMX2 (HMX2) (Homo sapiens (Human)).